We begin with the raw amino-acid sequence, 440 residues long: Transposon Ty1-BL Gag polyprotein (440 aa).

Polar residues-rich tracts occupy residues S20–D31, V46–P55, and V137–H168. Disordered stretches follow at residues S20 to P84, V137 to P173, and Q350 to P424. Residues N299–H401 are RNA-binding. The segment covering S363 to R372 has biased composition (basic and acidic residues). The segment covering T373 to G411 has biased composition (polar residues).

In terms of assembly, homotrimer.

It is found in the cytoplasm. Its function is as follows. Capsid protein (CA) is the structural component of the virus-like particle (VLP), forming the shell that encapsulates the retrotransposons dimeric RNA genome. The particles are assembled from trimer-clustered units and there are holes in the capsid shells that allow for the diffusion of macromolecules. CA also has nucleocapsid-like chaperone activity, promoting primer tRNA(i)-Met annealing to the multipartite primer-binding site (PBS), dimerization of Ty1 RNA and initiation of reverse transcription. The sequence is that of Transposon Ty1-BL Gag polyprotein (TY1A-BL) from Saccharomyces cerevisiae (strain ATCC 204508 / S288c) (Baker's yeast).